Reading from the N-terminus, the 217-residue chain is Large ribosomal subunit protein uL1 (217 aa).

Ser-2 carries the N-acetylserine modification. Tyr-11 is subject to Phosphotyrosine. 2 positions are modified to N6-acetyllysine: Lys-91 and Lys-106. Residue Lys-118 is modified to N6-acetyllysine; alternate. Lys-118 participates in a covalent cross-link: Glycyl lysine isopeptide (Lys-Gly) (interchain with G-Cter in SUMO1); alternate. Lys-118 is covalently cross-linked (Glycyl lysine isopeptide (Lys-Gly) (interchain with G-Cter in SUMO2); alternate). A Glycyl lysine isopeptide (Lys-Gly) (interchain with G-Cter in SUMO2) cross-link involves residue Lys-161.

The protein belongs to the universal ribosomal protein uL1 family. In terms of assembly, component of the large ribosomal subunit.

It is found in the cytoplasm. In terms of biological role, component of the large ribosomal subunit. The ribosome is a large ribonucleoprotein complex responsible for the synthesis of proteins in the cell. The chain is Large ribosomal subunit protein uL1 (RPL10A) from Bos taurus (Bovine).